The following is a 431-amino-acid chain: Histidinol dehydrogenase (431 aa).

NAD(+) contacts are provided by Tyr-131, Gln-193, and Asn-216. Substrate contacts are provided by Ser-239, Gln-261, and His-264. Gln-261 and His-264 together coordinate Zn(2+). Active-site proton acceptor residues include Glu-329 and His-330. Substrate is bound by residues His-330, Asp-363, Glu-417, and His-422. Zn(2+) is bound at residue Asp-363. His-422 contributes to the Zn(2+) binding site.

This sequence belongs to the histidinol dehydrogenase family. The cofactor is Zn(2+).

It carries out the reaction L-histidinol + 2 NAD(+) + H2O = L-histidine + 2 NADH + 3 H(+). It functions in the pathway amino-acid biosynthesis; L-histidine biosynthesis; L-histidine from 5-phospho-alpha-D-ribose 1-diphosphate: step 9/9. Catalyzes the sequential NAD-dependent oxidations of L-histidinol to L-histidinaldehyde and then to L-histidine. This chain is Histidinol dehydrogenase, found in Clostridium acetobutylicum (strain ATCC 824 / DSM 792 / JCM 1419 / IAM 19013 / LMG 5710 / NBRC 13948 / NRRL B-527 / VKM B-1787 / 2291 / W).